Here is a 595-residue protein sequence, read N- to C-terminus: Alginate biosynthesis sensor protein KinB (595 aa).

The Cytoplasmic portion of the chain corresponds to 1–12; that stretch reads MSMPLPMKLRTR. A helical membrane pass occupies residues 13–33; it reads LFLSISALITVSLFGLLLGLF. The Periplasmic segment spans residues 34-167; it reads SVMQLGRAQE…SDAETSARHR (134 aa). Residues 168–188 form a helical membrane-spanning segment; sequence AYLVAGLLGLVGVAILLIGFV. Residues 189–595 are Cytoplasmic-facing; the sequence is TAHSIARRFG…GARFYMLLPV (407 aa). An HAMP domain is found at 195 to 247; the sequence is RRFGAPIETLARAADRIGEGDFDVTLPMTNVAEVGQLTRRFGLMAEALRQYRK. Positions 258 to 323 constitute a PAS domain; sequence RRLQAVLDSI…AVEKALLGEV (66 aa). The PAC domain maps to 327 to 369; sequence AMPDLVVDVAGESRLLAWSLYPVTHPGGHSVGAVLVVRDVTEQ. A Histidine kinase domain is found at 382-595; it reads RASHELRTPV…GARFYMLLPV (214 aa). The residue at position 385 (His-385) is a Phosphohistidine; by autocatalysis.

Autophosphorylated.

Its subcellular location is the cell inner membrane. It catalyses the reaction ATP + protein L-histidine = ADP + protein N-phospho-L-histidine.. Member of the two-component regulatory system AlgB/KinB involved in regulation of alginate biosynthesis genes. KinB functions as a membrane-associated protein kinase that phosphorylates AlgB, probably in response to environmental signals. This chain is Alginate biosynthesis sensor protein KinB (kinB), found in Pseudomonas aeruginosa.